A 71-amino-acid chain; its full sequence is UPF0435 protein RBAM_008100 (71 aa).

It belongs to the UPF0435 family.

This is UPF0435 protein RBAM_008100 from Bacillus velezensis (strain DSM 23117 / BGSC 10A6 / LMG 26770 / FZB42) (Bacillus amyloliquefaciens subsp. plantarum).